The following is a 275-amino-acid chain: Autophagy protein 5 (275 aa).

Met-1 carries the N-acetylmethionine modification. Lys-130 participates in a covalent cross-link: Glycyl lysine isopeptide (Lys-Gly) (interchain with G-Cter in ATG12).

It belongs to the ATG5 family. Forms a conjugate with ATG12. Part of the minor complex composed of 4 sets of ATG12-ATG5 and ATG16L1 (400 kDa); this complex interacts with ATG3 leading to disruption of ATG7 interaction and promotion of ATG8-like proteins lipidation. Forms an 800-kDa complex composed of ATG12-ATG5 and ATG16L2. The ATG12-ATG5 conjugate interacts with RAB33A; this interaction is bridged by ATG16L1 and promotes ATG12-ATG5-ATG16L1 complex recruitment to phagophores. Interacts with TECPR1; the interaction is direct and does not take place when ATG16L1 is associated with the ATG5-ATG12 conjugate. Interacts with DHX58/RIG-1, IFIH1/MDA5 and MAVS/IPS-1 in monomeric form as well as in ATG12-ATG5 conjugate form. The interaction with MAVS is further enhanced upon vesicular stomatitis virus (VSV) infection. Interacts with ATG3. Interacts with ATG7 and ATG10. Interacts with FADD. Interacts with Bassoon/BSN; this interaction is important for the regulation of presynaptic autophagy. Interacts with ATG16L2. Conjugated to ATG12; which is essential for autophagy, but is not required for association with isolation membrane. In terms of processing, acetylated by EP300.

The protein localises to the cytoplasm. It is found in the preautophagosomal structure membrane. Involved in autophagic vesicle formation. Conjugation with ATG12, through a ubiquitin-like conjugating system involving ATG7 as an E1-like activating enzyme and ATG10 as an E2-like conjugating enzyme, is essential for its function. The ATG12-ATG5 conjugate acts as an E3-like enzyme which is required for lipidation of ATG8 family proteins and their association to the vesicle membranes. Involved in mitochondrial quality control after oxidative damage, and in subsequent cellular longevity. Plays a critical role in multiple aspects of lymphocyte development and is essential for both B and T lymphocyte survival and proliferation. Required for optimal processing and presentation of antigens for MHC II. Involved in the maintenance of axon morphology and membrane structures, as well as in normal adipocyte differentiation. Promotes primary ciliogenesis through removal of OFD1 from centriolar satellites and degradation of IFT20 via the autophagic pathway. As part of the ATG8 conjugation system with ATG12 and ATG16L1, required for recruitment of LRRK2 to stressed lysosomes and induction of LRRK2 kinase activity in response to lysosomal stress. In terms of biological role, may play an important role in the apoptotic process, possibly within the modified cytoskeleton. Its expression is a relatively late event in the apoptotic process, occurring downstream of caspase activity. Plays a crucial role in IFN-gamma-induced autophagic cell death by interacting with FADD. The polypeptide is Autophagy protein 5 (Pongo abelii (Sumatran orangutan)).